The sequence spans 163 residues: CASP-like protein 1C2 (163 aa).

At 1-7 (MAKLHRL) the chain is on the cytoplasmic side. The chain crosses the membrane as a helical span at residues 8–28 (ISAVLRLAAAGAAAAAAVIMV). Topologically, residues 29–50 (TSHETTSLFGIEMEAKYSYTPS) are extracellular. Residues 51-71 (FVFFVVAFAVTFAYSLLAAVL) traverse the membrane as a helical segment. Residues 72–80 (VRPGTTASR) lie on the Cytoplasmic side of the membrane. A helical transmembrane segment spans residues 81–101 (LVLLSDVTVGMLLTGAVAATG). Topologically, residues 102-129 (AISQVGKSGNEHAGWLPICAQVQAYCGH) are extracellular. A helical membrane pass occupies residues 130–150 (VMGALIAGFVSLLLYFLIIMY). The Cytoplasmic portion of the chain corresponds to 151 to 163 (SLHAVAEPLCSCH).

It belongs to the Casparian strip membrane proteins (CASP) family. In terms of assembly, homodimer and heterodimers.

It localises to the cell membrane. The chain is CASP-like protein 1C2 from Zea mays (Maize).